Consider the following 520-residue polypeptide: Glycosyl hydrolase family 109 protein 5 (520 aa).

Positions 1–27 (MRTFKSLMISLCMGTTLCMCLPQTTTA) are cleaved as a signal peptide. NAD(+) is bound by residues 77–78 (MR), D99, 147–150 (WLHH), 167–168 (EV), and N196. Substrate-binding positions include Y225, R248, 260–263 (YATH), and Y338. Y260 is a binding site for NAD(+).

Belongs to the Gfo/Idh/MocA family. Glycosyl hydrolase 109 subfamily. The cofactor is NAD(+).

Glycosidase. The sequence is that of Glycosyl hydrolase family 109 protein 5 from Phocaeicola vulgatus (strain ATCC 8482 / DSM 1447 / JCM 5826 / CCUG 4940 / NBRC 14291 / NCTC 11154) (Bacteroides vulgatus).